The primary structure comprises 248 residues: 5'-nucleotidase SurE (248 aa).

Positions 8, 9, 39, and 91 each coordinate a divalent metal cation.

It belongs to the SurE nucleotidase family. A divalent metal cation is required as a cofactor.

It is found in the cytoplasm. It carries out the reaction a ribonucleoside 5'-phosphate + H2O = a ribonucleoside + phosphate. Nucleotidase that shows phosphatase activity on nucleoside 5'-monophosphates. The sequence is that of 5'-nucleotidase SurE from Pseudoalteromonas atlantica (strain T6c / ATCC BAA-1087).